The primary structure comprises 192 residues: MFKFDNLILASSSKQRLCLLNQLGVLPGEIVIPNIDESPLKKELPKIYSMRVAKEKVIKVSLLYPKRFILGADTVVCCGRKILPKAETEDQAFEILELISGRRHRVYTSVYLYVPGKKLHYRNVMTVVKIKRLSVKEINSYILSGEWKGKAGACNIQGNAGKFVISMNGSYSSVIGLPLYETYSILSQYFPI.

Catalysis depends on aspartate 73, which acts as the Proton acceptor.

It belongs to the Maf family. A divalent metal cation is required as a cofactor.

Its subcellular location is the cytoplasm. It carries out the reaction a ribonucleoside 5'-triphosphate + H2O = a ribonucleoside 5'-phosphate + diphosphate + H(+). The catalysed reaction is a 2'-deoxyribonucleoside 5'-triphosphate + H2O = a 2'-deoxyribonucleoside 5'-phosphate + diphosphate + H(+). In terms of biological role, nucleoside triphosphate pyrophosphatase. May have a dual role in cell division arrest and in preventing the incorporation of modified nucleotides into cellular nucleic acids. The sequence is that of Nucleoside triphosphate pyrophosphatase from Ehrlichia ruminantium (strain Gardel).